We begin with the raw amino-acid sequence, 244 residues long: Mannose-binding protein C (244 aa).

Residues 1–18 form the signal peptide; it reads MSLFTSFLLLCVLTAVYA. A Collagen-like domain is found at 38 to 96; it reads GLNGFPGKDGHDGAKGEKGEPGQGLRGLQGPPGKVGPAGPPGNPGSKGATGPKGDRGES. Residue P43 is modified to 4-hydroxyproline. Residues 43–99 are disordered; the sequence is PGKDGHDGAKGEKGEPGQGLRGLQGPPGKVGPAGPPGNPGSKGATGPKGDRGESVEF. The segment covering 45 to 57 has biased composition (basic and acidic residues); the sequence is KDGHDGAKGEKGE. 4-hydroxyproline occurs at positions 58, 69, 78, and 81. The span at 65–74 shows a compositional bias: low complexity; it reads LQGPPGKVGP. Residues 108–126 are a coiled coil; sequence IAALRSELRAMRKWVLLSM. In terms of domain architecture, C-type lectin spans 129 to 241; that stretch reads NVGKKYFMSS…CSDSFLVVCE (113 aa). Cystine bridges form between C151/C240 and C218/C232.

Oligomeric complex of 3 or more homotrimers. Interacts with MASP1 and MASP2. Interacts with MEP1A and MEP1B and may inhibit their catalytic activity.

It is found in the secreted. In terms of biological role, calcium-dependent lectin involved in innate immune defense. Binds mannose, fucose and N-acetylglucosamine on different microorganisms and activates the lectin complement pathway. Binds to late apoptotic cells, as well as to apoptotic blebs and to necrotic cells, but not to early apoptotic cells, facilitating their uptake by macrophages. The chain is Mannose-binding protein C (Mbl2) from Rattus norvegicus (Rat).